The following is a 428-amino-acid chain: GTPase Obg (428 aa).

One can recognise an Obg domain in the interval 1-158 (MFIDIAKVFI…LSIVLELKLL (158 aa)). The region spanning 159–331 (ADVGLLGFPN…VIKEAARMLK (173 aa)) is the OBG-type G domain. Residues 165 to 172 (GFPNVGKS), 190 to 194 (FTTLK), 212 to 215 (DIPG), 282 to 285 (NKSD), and 312 to 314 (SAA) contribute to the GTP site. Mg(2+)-binding residues include Ser-172 and Thr-192. An OCT domain is found at 345 to 428 (MYIPEEKKFT…LNDFEFEYLL (84 aa)).

It belongs to the TRAFAC class OBG-HflX-like GTPase superfamily. OBG GTPase family. Monomer. Requires Mg(2+) as cofactor.

The protein localises to the cytoplasm. Functionally, an essential GTPase which binds GTP, GDP and possibly (p)ppGpp with moderate affinity, with high nucleotide exchange rates and a fairly low GTP hydrolysis rate. Plays a role in control of the cell cycle, stress response, ribosome biogenesis and in those bacteria that undergo differentiation, in morphogenesis control. The sequence is that of GTPase Obg from Clostridium botulinum (strain Alaska E43 / Type E3).